The primary structure comprises 241 residues: Phosphoglycolate phosphatase (241 aa).

Asp8 (nucleophile) is an active-site residue. Mg(2+) is bound by residues Asp8, Asp10, and Asp174.

This sequence belongs to the HAD-like hydrolase superfamily. CbbY/CbbZ/Gph/YieH family. Requires Mg(2+) as cofactor.

It catalyses the reaction 2-phosphoglycolate + H2O = glycolate + phosphate. The protein operates within organic acid metabolism; glycolate biosynthesis; glycolate from 2-phosphoglycolate: step 1/1. Specifically catalyzes the dephosphorylation of 2-phosphoglycolate. Is involved in the dissimilation of the intracellular 2-phosphoglycolate formed during the DNA repair of 3'-phosphoglycolate ends, a major class of DNA lesions induced by oxidative stress. This Rhodospirillum rubrum (strain ATCC 11170 / ATH 1.1.1 / DSM 467 / LMG 4362 / NCIMB 8255 / S1) protein is Phosphoglycolate phosphatase.